The primary structure comprises 447 residues: Glutamate-1-semialdehyde 2,1-aminomutase (447 aa).

At Lys277 the chain carries N6-(pyridoxal phosphate)lysine.

This sequence belongs to the class-III pyridoxal-phosphate-dependent aminotransferase family. HemL subfamily. Homodimer. The cofactor is pyridoxal 5'-phosphate.

Its subcellular location is the cytoplasm. The catalysed reaction is (S)-4-amino-5-oxopentanoate = 5-aminolevulinate. Its pathway is porphyrin-containing compound metabolism; protoporphyrin-IX biosynthesis; 5-aminolevulinate from L-glutamyl-tRNA(Glu): step 2/2. This is Glutamate-1-semialdehyde 2,1-aminomutase from Arthrobacter sp. (strain FB24).